We begin with the raw amino-acid sequence, 935 residues long: MDKIIIQGARENNLKNIFLEIPKNQFVVFTGLSGSGKSTLAFDTLYAEGQRRYLESLSSYARQFLDKVGKPNVDKIEGLTPAIAIDQKTTSKNPRSTVGTITEIYDYLRLLFARVGEQFCPTCLEPISSMSTSDIISQICHLEENSKIIILAPIIKDKKGSFNDKLESLRLKGYVRAFVDGVMVRLDEEIHLHKTKKHTIEAVVDRVVVNNENASRIASAIEKALKESYGELEVEILQDNAPSIRKHYSEHKACFKCKMSFEELEPLSFSFNSPKGACESCLGLGTKFSLDISKILDPNTPLNQGAIKVIFGYNRSYYAQMFEGFCEYNGIDSALCFNELNKEQQDALLYGNGTEISFHFKNSPLKRPWKGIIQIAYDMFKEQKDLSDYMSEKTCSSCEGHRLKASSLSVQVAGLKMADFLTKPIEEVYHFFNDPTHFSYLNEQEKKIAEPILKEILERVFFLYDVGLGYLTLGRDARTISGGESQRIRIASQIGSGLTGVLYVLDEPSIGLHEKDTLKLINTLRNLQKKGNTLIVVEHDKETIKHADFVVDIGPKAGRHGGEVVFSGSVKELLQNNHSTALYLNGTKKIERPKFELPKEKHFLEIKNVNINNIKNLSVQIPLKQLVCITGVSGSGKSSLILQTLLPTAQTLLNHAKKTQSLNGVEIVGLEHLDKVIYLDQAPIGKTPRSNPATYTGVMDEIRILFAEQKEAKILGYSASRFSFNVKGGRCEKCQGDGDIKIEMHFLPDVLVQCDSCKGAKYNPQTLEIKVKGKSIADVLNMSVEEAYEFFAKFPKIAVKLKTLMDVGLGYITLGQNATTLSGGEAQRIKLAKELSKKDTGKTLYILDEPTTGLHFEDVNHLLQVLHSLVALGNSMLVIEHNLDIIKNADYIIDMGPDGGDKGGKVIASGTPLEVAQNCEKTQSYTGKFLALELK.

Residue 31 to 38 (GLSGSGKS) coordinates ATP. A C4-type zinc finger spans residues 254-281 (CFKCKMSFEELEPLSFSFNSPKGACESC). ABC transporter domains follow at residues 310 to 579 (IFGY…NNHS) and 599 to 931 (KEKH…KFLA). An ATP-binding site is contributed by 631 to 638 (GVSGSGKS). The C4-type zinc-finger motif lies at 731 to 757 (CEKCQGDGDIKIEMHFLPDVLVQCDSC).

The protein belongs to the ABC transporter superfamily. UvrA family. Forms a heterotetramer with UvrB during the search for lesions.

The protein resides in the cytoplasm. In terms of biological role, the UvrABC repair system catalyzes the recognition and processing of DNA lesions. UvrA is an ATPase and a DNA-binding protein. A damage recognition complex composed of 2 UvrA and 2 UvrB subunits scans DNA for abnormalities. When the presence of a lesion has been verified by UvrB, the UvrA molecules dissociate. This chain is UvrABC system protein A, found in Helicobacter pylori (strain ATCC 700392 / 26695) (Campylobacter pylori).